We begin with the raw amino-acid sequence, 649 residues long: Echinoderm microtubule-associated protein-like 2 (649 aa).

Positions 10 to 649 (KEVIFSMEEG…DTSVLQWRVA (640 aa)) are tandem atypical propeller in EMLs. WD repeat units follow at residues 56–93 (KLDW…LYSV), 97–144 (RQRH…VWDS), 151–192 (HVLG…VWDW), 195–234 (ESKV…FWSL), 241–280 (KRQG…VWGK), 285–323 (ITQE…LWGS), 369–406 (FSLL…LWSS), 410–447 (QPVW…LLDT), 452–489 (LVAI…VYTV), 495–535 (KVSR…YWDP), 564–602 (FGIW…LFSY), and 609–648 (ALSH…QWRV). Positions 65–106 (GRDCRANLYLLPTGEVVYFVASVAVLYSVEEQRQRHYLGHND) form a coiled coil.

Belongs to the WD repeat EMAP family. Interacts with GRID2 and may also interact with GRID1. Interacts with EML3. Binds unpolymerized tubulins via its WD repeat region.

It is found in the cytoplasm. The protein resides in the cytoskeleton. The protein localises to the spindle. Tubulin binding protein that inhibits microtubule nucleation and growth, resulting in shorter microtubules. This is Echinoderm microtubule-associated protein-like 2 (Eml2) from Mus musculus (Mouse).